The primary structure comprises 150 residues: Large-conductance mechanosensitive channel (150 aa).

Transmembrane regions (helical) follow at residues 14-34 (VIDLAIGIIIGAAFGKIVTSF) and 81-101 (GVFLNSIIDFIIVAVAIFLVV).

This sequence belongs to the MscL family. Homopentamer.

The protein localises to the cell membrane. Channel that opens in response to stretch forces in the membrane lipid bilayer. May participate in the regulation of osmotic pressure changes within the cell. The protein is Large-conductance mechanosensitive channel of Syntrophomonas wolfei subsp. wolfei (strain DSM 2245B / Goettingen).